Consider the following 700-residue polypeptide: Phenylalanine ammonia-lyase hkm12 (700 aa).

Residue tyrosine 82 is the Proton donor/acceptor of the active site. The 5-imidazolinone (Ala-Gly) cross-link spans 183 to 185; that stretch reads ASG. Serine 184 is modified (2,3-didehydroalanine (Ser)). Asparagine 242, glutamine 325, arginine 331, asparagine 361, lysine 432, glutamate 460, and asparagine 463 together coordinate (E)-cinnamate.

The protein belongs to the PAL/histidase family. In terms of processing, contains an active site 4-methylidene-imidazol-5-one (MIO), which is formed autocatalytically by cyclization and dehydration of residues Ala-Ser-Gly.

It carries out the reaction L-phenylalanine = (E)-cinnamate + NH4(+). The protein operates within secondary metabolite biosynthesis. Phenylalanine ammonia-lyase; part of the gene cluster that mediates the biosynthesis of hancockiamides, an unusual new family of N-cinnamoylated piperazines. The NRPS hkm10 and the NmrA-like reductase hkm9 are proposed to convert two molecules of L-Phe to the intermediary piperazine called xenocockiamide A. Xenocockiamide A is then converted to hancockiamide D via a series of hydroxylations and O-methylations. The tyrosinase hkm6 may catalyze an aromatic hydroxylation, then the 2-oxoglutarate-dependent Fe(II) dioxygenase hkm4 and the FAD-dependent phenol hydroxylase hkm7 may catalyze consecutive hydroxylations to install 2 more hydroxy groups, and the methyltransferase hkm8 probably catalyzes two methylations using 2 molecules of S-adenosyl-L-methionine (SAM). The NRPS hkm11 activates and transfers trans-cinnamate supplied by the PAL hkm12 to hancockiamide D and produces hancockiamide A. NRPS Hkm11 has the flexibility to tolerate the bulky hancockiamide G as a substrate and the absence of the acetyl-transferase hkm3 opens up the opportunity for hkm11 to introduce a second N-cinnamoyl moiety. The cytochrome P450 monooxygenase hkm5 catalyzes the methylenedioxy bridge formation, converting hancockiamide A into hancockiamide G. Hkm5 can also convert hancockiamide B into hancockiamide C, and hancockiamide D into hancockiamide H. The N-acetyltransferase hkm3 finally transfers an acetyl group to 1-N of piperazine, converting hancockiamide A into hancockiamide B and hancockiamide G into hancockiamide C. This is Phenylalanine ammonia-lyase hkm12 from Aspergillus hancockii.